We begin with the raw amino-acid sequence, 81 residues long: Photosystem I iron-sulfur center (81 aa).

2 consecutive 4Fe-4S ferredoxin-type domains span residues 2-31 (SHSVKIYDTCIGCTQCVRACPLDVLEMVPW) and 39-68 (IAASPRTEDCVGCKRCETACPTDFLSIRVY). Positions 11, 14, 17, 21, 48, 51, 54, and 58 each coordinate [4Fe-4S] cluster.

As to quaternary structure, the cyanobacterial PSI reaction center is composed of one copy each of PsaA,B,C,D,E,F,I,J,K,L,M and X, and forms trimeric complexes. The cofactor is [4Fe-4S] cluster.

The protein resides in the cellular thylakoid membrane. The enzyme catalyses reduced [plastocyanin] + hnu + oxidized [2Fe-2S]-[ferredoxin] = oxidized [plastocyanin] + reduced [2Fe-2S]-[ferredoxin]. Functionally, apoprotein for the two 4Fe-4S centers FA and FB of photosystem I (PSI); essential for photochemical activity. FB is the terminal electron acceptor of PSI, donating electrons to ferredoxin. The C-terminus interacts with PsaA/B/D and helps assemble the protein into the PSI complex. Required for binding of PsaD and PsaE to PSI. PSI is a plastocyanin/cytochrome c6-ferredoxin oxidoreductase, converting photonic excitation into a charge separation, which transfers an electron from the donor P700 chlorophyll pair to the spectroscopically characterized acceptors A0, A1, FX, FA and FB in turn. The chain is Photosystem I iron-sulfur center from Synechococcus elongatus (strain ATCC 33912 / PCC 7942 / FACHB-805) (Anacystis nidulans R2).